Reading from the N-terminus, the 289-residue chain is 18S rRNA (guanine-N(7))-methyltransferase RID2 (289 aa).

The segment at 215–289 (KNEYDESCSE…FTSRKRRTRF (75 aa)) is disordered. Residues 219–237 (DESCSEDDNSDDEESEEVG) are compositionally biased toward acidic residues. Positions 243–254 (RPRKRQRTNTKV) are enriched in basic residues. Basic and acidic residues predominate over residues 255–264 (KGREWVLRKK). A Nuclear localization signal motif is present at residues 268-275 (RRKGKNVP).

The protein belongs to the class I-like SAM-binding methyltransferase superfamily. BUD23/WBSCR22 family. Expressed in seedlings, roots and flowers.

It is found in the nucleus. The protein resides in the nucleoplasm. The protein localises to the cytoplasm. It localises to the perinuclear region. Its subcellular location is the nucleolus. It carries out the reaction guanosine(1575) in yeast 18S rRNA + S-adenosyl-L-methionine = N(7)-methylguanosine(1575) in yeast 18S rRNA + S-adenosyl-L-homocysteine. Functionally, essential protein. S-adenosyl-L-methionine-dependent methyltransferase that specifically methylates the N(7) position of a guanine in 18S rRNA. Requires the methyltransferase adapter protein TRM112 for full rRNA methyltransferase activity. Important for biogenesis end export of the 40S ribosomal subunit independent on its methyltransferase activity. Involved in the pre-rRNA processing steps in the nucleolus leading to small-subunit rRNA production independently of its RNA-modifying catalytic activity. Supports cell proliferation. Required for the initiation of lateral root primordia formation and for the root apical meristem (RAM) organization as well as for leaves development. During callus formation from hypocotyl and root explants, required for the initial stage of reactivation of cell proliferation in the hypocotyl stele. Involved in leaf polarity establishment by functioning cooperatively with AS2 to repress abaxial genes ARF3, ARF4, KAN1, KAN2, YAB1 and YAB5, and the knox homeobox genes KNAT1, KNAT2, KNAT6, and STM to promote adaxial development in leaf primordia at shoot apical meristems at high temperatures. In Arabidopsis thaliana (Mouse-ear cress), this protein is 18S rRNA (guanine-N(7))-methyltransferase RID2.